The sequence spans 1293 residues: DNA-directed RNA polymerase subunit beta' (1293 aa).

Zn(2+)-binding residues include Cys-60, Cys-62, Cys-75, and Cys-78. Positions 535, 537, and 539 each coordinate Mg(2+). 4 residues coordinate Zn(2+): Cys-873, Cys-950, Cys-957, and Cys-960.

It belongs to the RNA polymerase beta' chain family. The RNAP catalytic core consists of 2 alpha, 1 beta, 1 beta' and 1 omega subunit. When a sigma factor is associated with the core the holoenzyme is formed, which can initiate transcription. Mg(2+) serves as cofactor. Zn(2+) is required as a cofactor.

It catalyses the reaction RNA(n) + a ribonucleoside 5'-triphosphate = RNA(n+1) + diphosphate. In terms of biological role, DNA-dependent RNA polymerase catalyzes the transcription of DNA into RNA using the four ribonucleoside triphosphates as substrates. The protein is DNA-directed RNA polymerase subunit beta' of Cutibacterium acnes (strain DSM 16379 / KPA171202) (Propionibacterium acnes).